A 123-amino-acid polypeptide reads, in one-letter code: Histone H2B.1, embryonic (123 aa).

The tract at residues 1–32 is disordered; the sequence is MAPTGQVAKKGSKKAVKPPRASGGKKRHRKRK. The segment covering 10 to 32 has biased composition (basic residues); that stretch reads KGSKKAVKPPRASGGKKRHRKRK. Residue Ser-110 is glycosylated (O-linked (GlcNAc) serine). Lys-118 participates in a covalent cross-link: Glycyl lysine isopeptide (Lys-Gly) (interchain with G-Cter in ubiquitin).

The protein belongs to the histone H2B family. In terms of assembly, the nucleosome is a histone octamer containing two molecules each of H2A, H2B, H3 and H4 assembled in one H3-H4 heterotetramer and two H2A-H2B heterodimers. The octamer wraps approximately 147 bp of DNA. Monoubiquitination of Lys-118 gives a specific tag for epigenetic transcriptional activation and is also prerequisite for histone H3 'Lys-4' and 'Lys-79' methylation. In terms of processing, glcNAcylation at Ser-110 promotes monoubiquitination of Lys-118. It fluctuates in response to extracellular glucose, and associates with transcribed genes.

The protein resides in the nucleus. The protein localises to the chromosome. Core component of nucleosome. Nucleosomes wrap and compact DNA into chromatin, limiting DNA accessibility to the cellular machineries which require DNA as a template. Histones thereby play a central role in transcription regulation, DNA repair, DNA replication and chromosomal stability. DNA accessibility is regulated via a complex set of post-translational modifications of histones, also called histone code, and nucleosome remodeling. The sequence is that of Histone H2B.1, embryonic from Psammechinus miliaris (Green sea urchin).